A 269-amino-acid polypeptide reads, in one-letter code: Shikimate dehydrogenase (NADP(+)) (269 aa).

Shikimate-binding positions include 19-21 (SLS) and threonine 66. Residue lysine 70 is the Proton acceptor of the active site. Residue aspartate 82 participates in NADP(+) binding. Asparagine 91 and aspartate 106 together coordinate shikimate. Residues 130 to 134 (GAGGA), 153 to 158 (NRTKEK), and isoleucine 214 each bind NADP(+). Residue tyrosine 216 coordinates shikimate. Position 235 (glycine 235) interacts with NADP(+). Glutamine 242 lines the shikimate pocket.

It belongs to the shikimate dehydrogenase family. As to quaternary structure, homodimer.

It catalyses the reaction shikimate + NADP(+) = 3-dehydroshikimate + NADPH + H(+). It functions in the pathway metabolic intermediate biosynthesis; chorismate biosynthesis; chorismate from D-erythrose 4-phosphate and phosphoenolpyruvate: step 4/7. Involved in the biosynthesis of the chorismate, which leads to the biosynthesis of aromatic amino acids. Catalyzes the reversible NADPH linked reduction of 3-dehydroshikimate (DHSA) to yield shikimate (SA). This chain is Shikimate dehydrogenase (NADP(+)), found in Aquifex aeolicus (strain VF5).